The primary structure comprises 99 residues: Integration host factor subunit alpha (99 aa).

The protein belongs to the bacterial histone-like protein family. In terms of assembly, heterodimer of an alpha and a beta chain.

Functionally, this protein is one of the two subunits of integration host factor, a specific DNA-binding protein that functions in genetic recombination as well as in transcriptional and translational control. The chain is Integration host factor subunit alpha from Psychrobacter cryohalolentis (strain ATCC BAA-1226 / DSM 17306 / VKM B-2378 / K5).